The sequence spans 409 residues: Histidine--tRNA ligase (409 aa).

This sequence belongs to the class-II aminoacyl-tRNA synthetase family.

It is found in the cytoplasm. It carries out the reaction tRNA(His) + L-histidine + ATP = L-histidyl-tRNA(His) + AMP + diphosphate + H(+). The chain is Histidine--tRNA ligase from Methanosphaerula palustris (strain ATCC BAA-1556 / DSM 19958 / E1-9c).